The following is a 447-amino-acid chain: Asparagine--tRNA ligase (447 aa).

Belongs to the class-II aminoacyl-tRNA synthetase family. As to quaternary structure, homodimer.

It is found in the cytoplasm. It carries out the reaction tRNA(Asn) + L-asparagine + ATP = L-asparaginyl-tRNA(Asn) + AMP + diphosphate + H(+). The protein is Asparagine--tRNA ligase of Herpetosiphon aurantiacus (strain ATCC 23779 / DSM 785 / 114-95).